Here is a 506-residue protein sequence, read N- to C-terminus: Aldehyde dehydrogenase [NAD(P)+] 1 (506 aa).

Residue E268 is the Proton acceptor of the active site. Catalysis depends on C302, which acts as the Nucleophile.

It belongs to the aldehyde dehydrogenase family.

Its subcellular location is the cytoplasm. It catalyses the reaction an aldehyde + NAD(+) + H2O = a carboxylate + NADH + 2 H(+). The catalysed reaction is 3-aminopropanal + NAD(+) + H2O = beta-alanine + NADH + 2 H(+). Functionally, cytoplasmic aldehyde dehydrogenase involved in ethanol oxidation. Required for pantothenic acid production through the conversion of 3-aminopropanal to beta-alanine, an intermediate in pantothenic acid (vitamin B5) and coenzyme A (CoA) biosynthesis. This Saccharomyces cerevisiae (strain ATCC 204508 / S288c) (Baker's yeast) protein is Aldehyde dehydrogenase [NAD(P)+] 1 (ALD2).